The following is a 292-amino-acid chain: Ribonuclease Z (292 aa).

His-60, His-62, Asp-64, His-65, His-132, Asp-200, and His-256 together coordinate Zn(2+). Asp-64 acts as the Proton acceptor in catalysis.

It belongs to the RNase Z family. As to quaternary structure, homodimer. The cofactor is Zn(2+).

It catalyses the reaction Endonucleolytic cleavage of RNA, removing extra 3' nucleotides from tRNA precursor, generating 3' termini of tRNAs. A 3'-hydroxy group is left at the tRNA terminus and a 5'-phosphoryl group is left at the trailer molecule.. In terms of biological role, zinc phosphodiesterase, which displays some tRNA 3'-processing endonuclease activity. Probably involved in tRNA maturation, by removing a 3'-trailer from precursor tRNA. The sequence is that of Ribonuclease Z from Sulfolobus acidocaldarius (strain ATCC 33909 / DSM 639 / JCM 8929 / NBRC 15157 / NCIMB 11770).